Here is a 146-residue protein sequence, read N- to C-terminus: Hemoglobin subunit beta-1 (146 aa).

The 145-residue stretch at 2-146 (KWSDKERAVI…VVSALGKQYC (145 aa)) folds into the Globin domain. H63 and H92 together coordinate heme b.

Belongs to the globin family. Hb1 is a heterotetramer of two alpha-1 chains and two beta-1 chains; Hb2 is a heterotetramer of two alpha-2 chains and two beta-1 chains. As to expression, red blood cells.

Its function is as follows. Involved in oxygen transport from gills to the various peripheral tissues. In Anarhichas minor (Arctic spotted wolffish), this protein is Hemoglobin subunit beta-1 (hbb1).